We begin with the raw amino-acid sequence, 145 residues long: Transmembrane protein 170A (145 aa).

Topologically, residues 1–50 (MIEALIVGEMQDVQIGFVKQILSLNLVPRSNNTTCGNNTSLCDFSEMWYG) are lumenal. Asn31 and Asn37 each carry an N-linked (GlcNAc...) asparagine glycan. Residues 51-71 (VFLWAVVSSLIFHLPAALLAL) traverse the membrane as a helical segment. Over 72–81 (ATLRRHKVAR) the chain is Cytoplasmic. Residues 82–102 (FFPLGILLMGIIGPLFGGVLT) traverse the membrane as a helical segment. Over 103–117 (SAAIAGVYKAAGKSM) the chain is Lumenal. Residues 118 to 138 (FSLEALVFGVGQSLFIFIISF) form a helical membrane-spanning segment. Residues 139–145 (LRILATL) lie on the Cytoplasmic side of the membrane.

This sequence belongs to the TMEM170 family.

Its subcellular location is the endoplasmic reticulum membrane. The protein localises to the nucleus envelope. May regulate membrane morphogenesis in the endoplasmic reticulum (ER) by promoting ER sheet formation at the expense of ER tubules. The chain is Transmembrane protein 170A (tmem170a) from Danio rerio (Zebrafish).